Here is a 498-residue protein sequence, read N- to C-terminus: Probable cytosol aminopeptidase (498 aa).

K264 and D269 together coordinate Mn(2+). K276 is an active-site residue. D287, D346, and E348 together coordinate Mn(2+). R350 is a catalytic residue.

It belongs to the peptidase M17 family. Mn(2+) serves as cofactor.

The protein resides in the cytoplasm. The catalysed reaction is Release of an N-terminal amino acid, Xaa-|-Yaa-, in which Xaa is preferably Leu, but may be other amino acids including Pro although not Arg or Lys, and Yaa may be Pro. Amino acid amides and methyl esters are also readily hydrolyzed, but rates on arylamides are exceedingly low.. It catalyses the reaction Release of an N-terminal amino acid, preferentially leucine, but not glutamic or aspartic acids.. Presumably involved in the processing and regular turnover of intracellular proteins. Catalyzes the removal of unsubstituted N-terminal amino acids from various peptides. The sequence is that of Probable cytosol aminopeptidase from Brucella anthropi (strain ATCC 49188 / DSM 6882 / CCUG 24695 / JCM 21032 / LMG 3331 / NBRC 15819 / NCTC 12168 / Alc 37) (Ochrobactrum anthropi).